The sequence spans 486 residues: CREB-regulated transcription coactivator 1 homolog (486 aa).

Positions 1 to 62 (MSNSNTPRKF…APMPIPQQGL (62 aa)) are disordered. Positions 9 to 23 (KFSEKIAILERKQNE) are enriched in basic and acidic residues. Positions 34–52 (QVQSITHHPTDSSGSSTAT) are enriched in polar residues. S76 bears the Phosphoserine; by AMPK mark. The interval 103 to 166 (PIQGHRSRSP…PPYNQPGQLV (64 aa)) is disordered. The segment covering 144-160 (RTPPQHPQYTPYGPPYN) has biased composition (pro residues). Residue S179 is modified to Phosphoserine; by AMPK. 3 disordered regions span residues 214 to 278 (SMPG…QSPN), 327 to 417 (FNQD…SNSP), and 460 to 486 (APPQ…MLQN). 3 stretches are compositionally biased toward polar residues: residues 224 to 245 (PNSQ…QGSP), 387 to 402 (PESQ…QLDP), and 461 to 475 (PPQT…NNSF).

The protein belongs to the TORC family. Interacts with crh-1. Phosphorylated by AMPK at Ser-76 and Ser-179. Dephosphorylated by tax-6, the catalytic subunit of calcineurin. In terms of tissue distribution, expressed throughout the intestine and in head and tail neurons. Expressed in octopaminergic RIC neurons.

It localises to the nucleus. Its subcellular location is the cytoplasm. The protein resides in the cytosol. In terms of biological role, transcriptional coactivator for crh-1, the homolog of vertebrate transcription factor CREB1. Regulates the transcription of metabolic genes and may have a role in mitochondrial dynamics and metabolism. Involved in modulation of lifespan. Through crh-1, counteracts the pro-lifespan-extension signals of AMPK both cell autonomously and, when expressed in neurons, at a systemic level, possibly using the catecholamine analog, octopamine, as a messenger. This is CREB-regulated transcription coactivator 1 homolog from Caenorhabditis elegans.